A 45-amino-acid polypeptide reads, in one-letter code: Iota-conotoxin-like R11.12 (45 aa).

4 disulfides stabilise this stretch: cysteine 5/cysteine 19, cysteine 12/cysteine 22, cysteine 18/cysteine 27, and cysteine 21/cysteine 36. The residue at position 43 (leucine 43) is a D-leucine. Position 45 (arginine 45) is a propeptide, removed by a carboxypeptidase.

The protein belongs to the conotoxin I1 superfamily. Expressed by the venom duct.

It localises to the secreted. Its function is as follows. Iota-conotoxins bind to voltage-gated sodium channels (Nav) and act as agonists by shifting the voltage-dependence of activation to more hyperpolarized levels. Produces general excitatory symptoms. The polypeptide is Iota-conotoxin-like R11.12 (Conus radiatus (Rayed cone)).